A 409-amino-acid chain; its full sequence is Serine protease inhibitor 2 (409 aa).

Residues 1 to 21 form the signal peptide; it reads MNKLNFVILCLAALLVFDATA. 2 N-linked (GlcNAc...) asparagine glycosylation sites follow: Asn294 and Asn324. The Hinge region; required for binding to peptidase motif lies at 356 to 360; the sequence is LGSEA.

The protein belongs to the serpin family. Forms a covalent heterodimer with protease CLIPB9; the interaction inhibits CLIPB9 protease activity. Forms a covalent heterodimer with protease CLIPB10; the interaction inhibits CLIPB10 catalytic activity. Interacts with CLIPB4 in the hemolymph of immune-challenged female mosquitoes; the interaction results in CLIPB4 inhibition. Post-translationally, protease CLIPB9 binds to SRPN2 via the hinge region resulting in the cleavage of the reactive bond. This leads to a conformational change in SRPN2 which traps CLIPB9 and distorts its active site, resulting in CLIPB9 inactivation.

Its subcellular location is the secreted. In terms of biological role, serine protease inhibitor that functions in the melanization-mediated immune response. By preventing the activation of phenoloxidases through the inhibiting of serine proteases CLIPB9, CLIPB10 and CLIPB4, negatively regulates melanization in the hemolymph. By preventing melanization, has a detrimental role during P.berghei parasite mediated-infection and invasion of the mosquito midgut. This Anopheles gambiae (African malaria mosquito) protein is Serine protease inhibitor 2.